The following is a 344-amino-acid chain: Succinylglutamate desuccinylase (344 aa).

Zn(2+)-binding residues include His-63, Glu-66, and His-160. Glu-224 is a catalytic residue.

Belongs to the AspA/AstE family. Succinylglutamate desuccinylase subfamily. It depends on Zn(2+) as a cofactor.

The enzyme catalyses N-succinyl-L-glutamate + H2O = L-glutamate + succinate. Its pathway is amino-acid degradation; L-arginine degradation via AST pathway; L-glutamate and succinate from L-arginine: step 5/5. Transforms N(2)-succinylglutamate into succinate and glutamate. The sequence is that of Succinylglutamate desuccinylase from Shewanella sp. (strain MR-4).